A 23-amino-acid polypeptide reads, in one-letter code: Alyteserin-1b (23 aa).

Position 23 is an asparagine amide (Asn23).

In terms of tissue distribution, expressed by the skin glands.

The protein localises to the secreted. It is found in the target cell membrane. In terms of biological role, antibacterial peptide with amphipathic alpha-helical structure. Shows selective growth inhibitory activity against the Gram-negative bacteria E.coli (MIC=25 uM). Has a weak hemolytic activity against human erythrocytes (LC(50)=200 uM). Is not active against S.aureus (MIC=200 uM). The protein is Alyteserin-1b of Alytes obstetricans (Common midwife toad).